The sequence spans 347 residues: DNA-directed RNA polymerase subunit alpha (347 aa).

The tract at residues 1 to 226 (MLISQRPTLS…ELFGLARELN (226 aa)) is alpha N-terminal domain (alpha-NTD). Positions 243 to 347 (HIASFALPID…SQDYAETEQL (105 aa)) are alpha C-terminal domain (alpha-CTD). Positions 326-347 (TTGTWSTDGAYDSQDYAETEQL) are disordered.

The protein belongs to the RNA polymerase alpha chain family. As to quaternary structure, homodimer. The RNAP catalytic core consists of 2 alpha, 1 beta, 1 beta' and 1 omega subunit. When a sigma factor is associated with the core the holoenzyme is formed, which can initiate transcription.

The catalysed reaction is RNA(n) + a ribonucleoside 5'-triphosphate = RNA(n+1) + diphosphate. DNA-dependent RNA polymerase catalyzes the transcription of DNA into RNA using the four ribonucleoside triphosphates as substrates. The polypeptide is DNA-directed RNA polymerase subunit alpha (Mycobacterium leprae (strain TN)).